The sequence spans 353 residues: UPF0283 membrane protein YcjF (353 aa).

Over 1–69 (MTEPLKPRID…LRPKRSLWRK (69 aa)) the chain is Periplasmic. Residues 70 to 90 (MVMGGLALFGASVVGQGVQWT) form a helical membrane-spanning segment. Residues 91 to 99 (MNAWQTQDW) lie on the Cytoplasmic side of the membrane. A helical transmembrane segment spans residues 100–120 (VALGGCAAGALIIGAGVGSVV). At 121–212 (TEWRRLWRLR…ARREISRSAA (92 aa)) the chain is on the periplasmic side. The helical transmembrane segment at 213–233 (ESTLMIAVSPLALVDMAFIAW) threads the bilayer. Residues 234 to 353 (RNLRLINRIA…LQKGKTPSEK (120 aa)) lie on the Cytoplasmic side of the membrane.

This sequence belongs to the UPF0283 family.

It is found in the cell inner membrane. The polypeptide is UPF0283 membrane protein YcjF (ycjF) (Escherichia coli O157:H7).